The following is a 236-amino-acid chain: MRITQLSSQSFAFPSPELALREPNGLLALGGDLSPPRLLAAYERGIFPWFSPGEMILWWSPDPRAVLYPEDLHISRSMRRFLRNCPYRFTLNHAFKDVIRACATLRDEGTWIGDDVQQAYCHLHTLGHAHSVEVWLENELVGGLYGISVGSLFCGESMFSRANNASKSALMVFCHHFTRHGGELIDCQVLNAHTASLGAIEIPRNFFLQQLSQLQFSPLPAECWLPQSLNFSSAMQ.

The protein belongs to the L/F-transferase family.

It is found in the cytoplasm. It carries out the reaction N-terminal L-lysyl-[protein] + L-leucyl-tRNA(Leu) = N-terminal L-leucyl-L-lysyl-[protein] + tRNA(Leu) + H(+). The enzyme catalyses N-terminal L-arginyl-[protein] + L-leucyl-tRNA(Leu) = N-terminal L-leucyl-L-arginyl-[protein] + tRNA(Leu) + H(+). The catalysed reaction is L-phenylalanyl-tRNA(Phe) + an N-terminal L-alpha-aminoacyl-[protein] = an N-terminal L-phenylalanyl-L-alpha-aminoacyl-[protein] + tRNA(Phe). In terms of biological role, functions in the N-end rule pathway of protein degradation where it conjugates Leu, Phe and, less efficiently, Met from aminoacyl-tRNAs to the N-termini of proteins containing an N-terminal arginine or lysine. This chain is Leucyl/phenylalanyl-tRNA--protein transferase, found in Yersinia enterocolitica serotype O:8 / biotype 1B (strain NCTC 13174 / 8081).